A 376-amino-acid polypeptide reads, in one-letter code: Phytanoyl-CoA hydroxylase-interacting protein-like (376 aa).

Residues Ser-12 and Ser-15 each carry the phosphoserine modification. Asn-23 carries N-linked (GlcNAc...) asparagine glycosylation. A Phosphoserine modification is found at Ser-25. Residue Asn-37 is glycosylated (N-linked (GlcNAc...) asparagine). Residues 52–161 (VPHNIKISNI…EIIEFCTADY (110 aa)) form the Fibronectin type-III domain.

This sequence belongs to the PHYHIP family.

May play a role in the development of the central system. This is Phytanoyl-CoA hydroxylase-interacting protein-like (PHYHIPL) from Homo sapiens (Human).